A 395-amino-acid chain; its full sequence is MAKKVALAYSGGLDTSVCIPILKEKYGYDEVVTISVDVGQPEEEIKRADAKAEKISNKHYTIDAKEEFVKDYVFPLIKANGSYEGYVMGTSIARPLIAKKVVEAARKEGAVALAHGCTGKGNDQLRFEAVFRQTDMDVIAPMREMNLTREWEIDYAKEHGIPVEVTKSKPWSVDENIWSRSIEGGRLEDPSFVPPEEIFEWTTSPEKTPEQPRIVDIGFEAGVPVSLDGEKMSGYALVKKMNEIAGENGVGRTDMIEDRVLGLKARENYEHPAATVLLAAHADLEKLVLTRSELKFKKIVDDQWSELAYYGLVDEPLYADLNAFIDKSQERVTGTVKVRLYKGALTILSRSSPNALYSEDLVSFDSQTIDQKDSEGFAKYHGFQARMYRKVMDKQ.

8–16 (AYSGGLDTS) provides a ligand contact to ATP. 2 residues coordinate L-citrulline: Tyr-86 and Ser-91. Gly-116 is a binding site for ATP. The L-aspartate site is built by Thr-118, Asn-122, and Asp-123. Residue Asn-122 participates in L-citrulline binding. Residues Arg-126, Ser-172, Ser-181, Glu-257, and Tyr-269 each coordinate L-citrulline.

Belongs to the argininosuccinate synthase family. Type 1 subfamily. Homotetramer.

Its subcellular location is the cytoplasm. The catalysed reaction is L-citrulline + L-aspartate + ATP = 2-(N(omega)-L-arginino)succinate + AMP + diphosphate + H(+). The protein operates within amino-acid biosynthesis; L-arginine biosynthesis; L-arginine from L-ornithine and carbamoyl phosphate: step 2/3. The polypeptide is Argininosuccinate synthase (Methanosarcina barkeri (strain Fusaro / DSM 804)).